Consider the following 824-residue polypeptide: Leucine--tRNA ligase (824 aa).

A 'HIGH' region motif is present at residues 42-52 (PYPSGHLHMGH). Residues 581-585 (KMSKS) carry the 'KMSKS' region motif. Lys-584 is a binding site for ATP.

This sequence belongs to the class-I aminoacyl-tRNA synthetase family.

It localises to the cytoplasm. The catalysed reaction is tRNA(Leu) + L-leucine + ATP = L-leucyl-tRNA(Leu) + AMP + diphosphate. This chain is Leucine--tRNA ligase, found in Syntrophomonas wolfei subsp. wolfei (strain DSM 2245B / Goettingen).